The following is a 266-amino-acid chain: Undecaprenyl-diphosphatase (266 aa).

7 helical membrane passes run P39–F59, S86–P106, V112–L132, L153–I173, F189–S209, I216–I236, and N246–L266.

The protein belongs to the UppP family.

The protein resides in the cell inner membrane. The catalysed reaction is di-trans,octa-cis-undecaprenyl diphosphate + H2O = di-trans,octa-cis-undecaprenyl phosphate + phosphate + H(+). In terms of biological role, catalyzes the dephosphorylation of undecaprenyl diphosphate (UPP). Confers resistance to bacitracin. The sequence is that of Undecaprenyl-diphosphatase from Prochlorococcus marinus (strain MIT 9215).